A 612-amino-acid polypeptide reads, in one-letter code: tRNA uridine 5-carboxymethylaminomethyl modification enzyme MnmG (612 aa).

9–14 (GAGHAG) contacts FAD. 270 to 284 (GPLYCPSIEDKVFKF) contacts NAD(+).

The protein belongs to the MnmG family. As to quaternary structure, homodimer. Heterotetramer of two MnmE and two MnmG subunits. It depends on FAD as a cofactor.

It localises to the cytoplasm. Functionally, NAD-binding protein involved in the addition of a carboxymethylaminomethyl (cmnm) group at the wobble position (U34) of certain tRNAs, forming tRNA-cmnm(5)s(2)U34. The chain is tRNA uridine 5-carboxymethylaminomethyl modification enzyme MnmG from Mycoplasma genitalium (strain ATCC 33530 / DSM 19775 / NCTC 10195 / G37) (Mycoplasmoides genitalium).